The chain runs to 592 residues: Potassium-transporting ATPase potassium-binding subunit (592 aa).

The next 11 membrane-spanning stretches (helical) occupy residues 7-27 (LQTV…GTFM), 71-91 (VLFN…QHLL), 136-156 (GLTV…IAVI), 179-199 (LYIL…QGVI), 287-307 (LEIL…GAMV), 314-334 (WTLL…LQGV), 411-431 (GLYT…LMIG), 449-469 (SVVT…IAMI), 473-493 (AVAA…YAFA), 515-535 (ILGA…VLAM), and 559-579 (FALW…FPAL).

Belongs to the KdpA family. The system is composed of three essential subunits: KdpA, KdpB and KdpC.

It is found in the cell inner membrane. Functionally, part of the high-affinity ATP-driven potassium transport (or Kdp) system, which catalyzes the hydrolysis of ATP coupled with the electrogenic transport of potassium into the cytoplasm. This subunit binds the periplasmic potassium ions and delivers the ions to the membrane domain of KdpB through an intramembrane tunnel. In Geobacter sulfurreducens (strain ATCC 51573 / DSM 12127 / PCA), this protein is Potassium-transporting ATPase potassium-binding subunit.